Here is a 196-residue protein sequence, read N- to C-terminus: Ribose 1,5-bisphosphate phosphokinase PhnN (196 aa).

The protein belongs to the ribose 1,5-bisphosphokinase family.

The catalysed reaction is alpha-D-ribose 1,5-bisphosphate + ATP = 5-phospho-alpha-D-ribose 1-diphosphate + ADP. The protein operates within metabolic intermediate biosynthesis; 5-phospho-alpha-D-ribose 1-diphosphate biosynthesis; 5-phospho-alpha-D-ribose 1-diphosphate from D-ribose 5-phosphate (route II): step 3/3. Its function is as follows. Catalyzes the phosphorylation of ribose 1,5-bisphosphate to 5-phospho-D-ribosyl alpha-1-diphosphate (PRPP). This Psychromonas ingrahamii (strain DSM 17664 / CCUG 51855 / 37) protein is Ribose 1,5-bisphosphate phosphokinase PhnN.